A 200-amino-acid chain; its full sequence is MKCPRCGKQEIRVLESRSAEGGQSVRRRRECMSCGYRFTTYERIEFMPIMVIKRDGSRESFNRNKILQGVMRACQKTQVSVKQMEELVNEIEEKLQLEDVQEVTTLRIGEMVLERLQRLSEVAYVRFASVYRKFQGIKDFVTELEQLERLETHLRRDLERPLRNSPPSESESTASPDWVGGIPQLLDQNDTSSNLSEIPK.

The segment at 3–34 (CPRCGKQEIRVLESRSAEGGQSVRRRRECMSC) is a zinc-finger region. Positions 49–139 (IMVIKRDGSR…VYRKFQGIKD (91 aa)) constitute an ATP-cone domain. A disordered region spans residues 158-200 (LERPLRNSPPSESESTASPDWVGGIPQLLDQNDTSSNLSEIPK). The span at 186–200 (LDQNDTSSNLSEIPK) shows a compositional bias: polar residues.

This sequence belongs to the NrdR family. Zn(2+) is required as a cofactor.

Functionally, negatively regulates transcription of bacterial ribonucleotide reductase nrd genes and operons by binding to NrdR-boxes. In Synechococcus sp. (strain JA-3-3Ab) (Cyanobacteria bacterium Yellowstone A-Prime), this protein is Transcriptional repressor NrdR.